Consider the following 196-residue polypeptide: Putative adenylate kinase (196 aa).

ATP-binding residues include Gly10, Gly12, Lys13, Thr14, and Ser15. The tract at residues 30–53 (YLNDLIKEEHLYSEVDEERDSVIA) is NMP. Residues 118 to 128 (KRGYSEEKINE) form an LID region. ATP is bound at residue Arg119.

Belongs to the adenylate kinase family. AK6 subfamily. In terms of assembly, interacts with uS11. Not a structural component of 40S pre-ribosomes, but transiently interacts with them by binding to uS11.

It carries out the reaction AMP + ATP = 2 ADP. It catalyses the reaction ATP + H2O = ADP + phosphate + H(+). Functionally, broad-specificity nucleoside monophosphate (NMP) kinase that catalyzes the reversible transfer of the terminal phosphate group between nucleoside triphosphates and monophosphates. Also has ATPase activity. Involved in the late maturation steps of the 30S ribosomal particles, specifically 16S rRNA maturation. While NMP activity is not required for ribosome maturation, ATPase activity is. Associates transiently with small ribosomal subunit protein uS11. ATP hydrolysis breaks the interaction with uS11. May temporarily remove uS11 from the ribosome to enable a conformational change of the ribosomal RNA that is needed for the final maturation step of the small ribosomal subunit. The polypeptide is Putative adenylate kinase (Methanosarcina mazei (strain ATCC BAA-159 / DSM 3647 / Goe1 / Go1 / JCM 11833 / OCM 88) (Methanosarcina frisia)).